A 337-amino-acid polypeptide reads, in one-letter code: tRNA-dihydrouridine synthase B (337 aa).

FMN is bound by residues 19–21 (PMA) and Gln-73. The active-site Proton donor is the Cys-103. FMN contacts are provided by residues Lys-142, 203–205 (NGD), and 227–228 (GR).

The protein belongs to the Dus family. DusB subfamily. Requires FMN as cofactor.

It carries out the reaction a 5,6-dihydrouridine in tRNA + NAD(+) = a uridine in tRNA + NADH + H(+). It catalyses the reaction a 5,6-dihydrouridine in tRNA + NADP(+) = a uridine in tRNA + NADPH + H(+). Catalyzes the synthesis of 5,6-dihydrouridine (D), a modified base found in the D-loop of most tRNAs, via the reduction of the C5-C6 double bond in target uridines. This Pseudomonas putida (strain ATCC 47054 / DSM 6125 / CFBP 8728 / NCIMB 11950 / KT2440) protein is tRNA-dihydrouridine synthase B.